The primary structure comprises 349 residues: DNA replication and repair protein RecF (349 aa).

30 to 37 (GKNGSGKT) is an ATP binding site.

It belongs to the RecF family.

It localises to the cytoplasm. In terms of biological role, the RecF protein is involved in DNA metabolism; it is required for DNA replication and normal SOS inducibility. RecF binds preferentially to single-stranded, linear DNA. It also seems to bind ATP. In Francisella tularensis subsp. holarctica (strain FTNF002-00 / FTA), this protein is DNA replication and repair protein RecF.